A 1612-amino-acid chain; its full sequence is DNA topoisomerase 2-beta (1612 aa).

N-acetylalanine is present on Ala-2. Lys-3 carries the post-translational modification N6-acetyllysine. Residues Lys-21 and Lys-22 each participate in a glycyl lysine isopeptide (Lys-Gly) (interchain with G-Cter in SUMO2) cross-link. ATP is bound by residues Asn-100, Asn-129, and 157-159 (SSN). Glycyl lysine isopeptide (Lys-Gly) (interchain with G-Cter in SUMO2) cross-links involve residues Lys-165 and Lys-166. ATP is bound at residue 170–177 (GRNGYGAK). Glycyl lysine isopeptide (Lys-Gly) (interchain with G-Cter in SUMO2) cross-links involve residues Lys-216 and Lys-287. An interaction with DNA region spans residues 351-353 (KKK). Glycyl lysine isopeptide (Lys-Gly) (interchain with G-Cter in SUMO2) cross-links involve residues Lys-355 and Lys-361. 385-387 (QTK) contributes to the ATP binding site. Residues Lys-425, Lys-427, and Lys-434 each participate in a glycyl lysine isopeptide (Lys-Gly) (interchain with G-Cter in SUMO2) cross-link. The region spanning 464-581 (CTLILTEGDS…SLLKHGFLEE (118 aa)) is the Toprim domain. Glu-470, Asp-550, and Asp-552 together coordinate Mg(2+). Glycyl lysine isopeptide (Lys-Gly) (interchain with G-Cter in SUMO2) cross-links involve residues Lys-588, Lys-593, Lys-623, Lys-631, Lys-634, Lys-664, and Lys-700. The 454-residue stretch at 724–1177 (IPSLVDGFKP…SPSDLWKEDL (454 aa)) folds into the Topo IIA-type catalytic domain. The active-site O-(5'-phospho-DNA)-tyrosine intermediate is Tyr-814. Residues 999-1008 (KLQTTLTCNS) form an interaction with DNA region. Residue Lys-1080 forms a Glycyl lysine isopeptide (Lys-Gly) (interchain with G-Cter in SUMO2) linkage. A disordered region spans residues 1098–1128 (AWKEAQEKAAEEEDSQNQHDDSSSDSGTPSG). Residues Lys-1202, Lys-1205, Lys-1214, and Lys-1215 each participate in a glycyl lysine isopeptide (Lys-Gly) (interchain with G-Cter in SUMO2) cross-link. Ser-1224 is subject to Phosphoserine. Glycyl lysine isopeptide (Lys-Gly) (interchain with G-Cter in SUMO2) cross-links involve residues Lys-1238, Lys-1250, and Lys-1259. Residues 1245–1586 (LLKKKKGDPD…FTSEPPALPR (342 aa)) are disordered. Thr-1280 carries the phosphothreonine modification. Glycyl lysine isopeptide (Lys-Gly) (interchain with G-Cter in SUMO2) cross-links involve residues Lys-1311 and Lys-1315. Composition is skewed to basic and acidic residues over residues 1322 to 1332 (PWSDDESKSES) and 1346 to 1358 (SLLR…RPKY). Phosphoserine is present on residues Ser-1324, Ser-1328, Ser-1330, Ser-1332, and Ser-1346. Residue Tyr-1358 is modified to Phosphotyrosine. The span at 1362 to 1379 (FSEEEDDDAAAADDSNDL) shows a compositional bias: acidic residues. Ser-1363 and Ser-1376 each carry phosphoserine. Lys-1385 is covalently cross-linked (Glycyl lysine isopeptide (Lys-Gly) (interchain with G-Cter in SUMO2)). Ser-1387 bears the Phosphoserine mark. A Phosphothreonine modification is found at Thr-1390. At Ser-1400 the chain carries Phosphoserine. A Phosphotyrosine modification is found at Tyr-1408. Phosphoserine is present on Ser-1411. Over residues 1417 to 1429 (ATPEKSSNDKKSQ) the composition is skewed to basic and acidic residues. Residue Lys-1427 forms a Glycyl lysine isopeptide (Lys-Gly) (interchain with G-Cter in SUMO2) linkage. A phosphoserine mark is found at Ser-1428, Ser-1439, and Ser-1441. Lys-1443 participates in a covalent cross-link: Glycyl lysine isopeptide (Lys-Gly) (interchain with G-Cter in SUMO2). Residues 1443–1453 (KSEDDSAKFDS) show a composition bias toward basic and acidic residues. Phosphoserine is present on residues Ser-1448, Ser-1453, and Ser-1460. Lys-1477 is covalently cross-linked (Glycyl lysine isopeptide (Lys-Gly) (interchain with G-Cter in SUMO2)). Positions 1493 to 1499 (KAKRAPK) are interaction with PLSCR1. Phosphoserine occurs at positions 1509, 1511, and 1513. Over residues 1526 to 1536 (GKGRGAKKRKA) the composition is skewed to basic residues. Phosphoserine is present on residues Ser-1537 and Ser-1539. The span at 1550–1561 (KPSKTASKKPKK) shows a compositional bias: basic residues. The residue at position 1562 (Thr-1562) is a Phosphothreonine. 2 positions are modified to phosphoserine: Ser-1563 and Ser-1568. At Tyr-1596 the chain carries Phosphotyrosine. The residue at position 1600 (Ser-1600) is a Phosphoserine.

Belongs to the type II topoisomerase family. As to quaternary structure, homodimer. Interacts with KIAA1210. Interacts with PLSCR1. It depends on Mg(2+) as a cofactor. Requires Mn(2+) as cofactor. Ca(2+) is required as a cofactor.

It localises to the nucleus. The protein resides in the nucleolus. Its subcellular location is the nucleoplasm. It catalyses the reaction ATP-dependent breakage, passage and rejoining of double-stranded DNA.. Functionally, key decatenating enzyme that alters DNA topology by binding to two double-stranded DNA molecules, generating a double-stranded break in one of the strands, passing the intact strand through the broken strand, and religating the broken strand. Plays a role in B-cell differentiation. The protein is DNA topoisomerase 2-beta (Top2b) of Mus musculus (Mouse).